The sequence spans 147 residues: NADH-quinone oxidoreductase subunit A (147 aa).

A run of 3 helical transmembrane segments spans residues 13 to 33 (LFSY…LGAV), 70 to 90 (YLVA…FSWA), and 104 to 124 (VVVF…WGAL).

Belongs to the complex I subunit 3 family. NDH-1 is composed of 14 different subunits. Subunits NuoA, H, J, K, L, M, N constitute the membrane sector of the complex.

It is found in the cell inner membrane. It catalyses the reaction a quinone + NADH + 5 H(+)(in) = a quinol + NAD(+) + 4 H(+)(out). Functionally, NDH-1 shuttles electrons from NADH, via FMN and iron-sulfur (Fe-S) centers, to quinones in the respiratory chain. The immediate electron acceptor for the enzyme in this species is believed to be ubiquinone. Couples the redox reaction to proton translocation (for every two electrons transferred, four hydrogen ions are translocated across the cytoplasmic membrane), and thus conserves the redox energy in a proton gradient. The protein is NADH-quinone oxidoreductase subunit A of Gluconacetobacter diazotrophicus (strain ATCC 49037 / DSM 5601 / CCUG 37298 / CIP 103539 / LMG 7603 / PAl5).